The primary structure comprises 134 residues: ATP synthase epsilon chain (134 aa).

The protein belongs to the ATPase epsilon chain family. As to quaternary structure, F-type ATPases have 2 components, CF(1) - the catalytic core - and CF(0) - the membrane proton channel. CF(1) has five subunits: alpha(3), beta(3), gamma(1), delta(1), epsilon(1). CF(0) has three main subunits: a, b and c.

It localises to the cellular thylakoid membrane. Its function is as follows. Produces ATP from ADP in the presence of a proton gradient across the membrane. This chain is ATP synthase epsilon chain, found in Prochlorococcus marinus (strain MIT 9215).